Consider the following 527-residue polypeptide: Catalase (527 aa).

Over residues 1–22 the composition is skewed to basic and acidic residues; sequence MADSRDPASDQMKQWKEQRAPQ. The disordered stretch occupies residues 1–34; that stretch reads MADSRDPASDQMKQWKEQRAPQKPDVLTTGGGNP. Ala2 bears the N-acetylalanine mark. A Phosphoserine modification is found at Ser9. Lys13 is subject to N6-succinyllysine. Catalysis depends on residues His75 and Asn148. His194, Ser201, Arg203, and Asn213 together coordinate NADP(+). N6-succinyllysine is present on Lys221. N6-acetyllysine is present on Lys233. NADP(+) contacts are provided by Lys237, Trp303, His305, and Lys306. Position 306 is an N6-acetyllysine; alternate (Lys306). N6-succinyllysine; alternate is present on Lys306. Tyr358 is a heme binding site. Ser417 and Ser434 each carry phosphoserine. N6-acetyllysine; alternate is present on residues Lys449 and Lys480. Lys449 and Lys480 each carry N6-succinyllysine; alternate. Residue Thr511 is modified to Phosphothreonine. The residue at position 517 (Ser517) is a Phosphoserine. Lys522 is modified (N6-succinyllysine). Residues 524-527 carry the Microbody targeting signal; atypical motif; the sequence is KANL.

It belongs to the catalase family. Homotetramer. Interacts (via microbody targeting signal) with PEX5, monomeric form interacts with PEX5, leading to its translocation into peroxisomes. Heme is required as a cofactor. NADP(+) serves as cofactor. As to expression, expressed in renal proximal tubules (at protein level).

It localises to the peroxisome matrix. It carries out the reaction 2 H2O2 = O2 + 2 H2O. In terms of biological role, catalyzes the degradation of hydrogen peroxide (H(2)O(2)) generated by peroxisomal oxidases to water and oxygen, thereby protecting cells from the toxic effects of hydrogen peroxide. Promotes growth of cells including T-cells, B-cells, myeloid leukemia cells, melanoma cells, mastocytoma cells and normal and transformed fibroblast cells. This is Catalase (Cat) from Rattus norvegicus (Rat).